The sequence spans 92 residues: Acylphosphatase (92 aa).

One can recognise an Acylphosphatase-like domain in the interval 3 to 92 (TKHVLVSGIV…GPRSTHFEVT (90 aa)). Residues R18 and N36 contribute to the active site.

Belongs to the acylphosphatase family.

The enzyme catalyses an acyl phosphate + H2O = a carboxylate + phosphate + H(+). The polypeptide is Acylphosphatase (acyP) (Alcanivorax borkumensis (strain ATCC 700651 / DSM 11573 / NCIMB 13689 / SK2)).